A 518-amino-acid polypeptide reads, in one-letter code: WEB family protein At2g40480 (518 aa).

2 coiled-coil regions span residues 95 to 141 and 188 to 219; these read DIKR…LQQE and DNLVVIQSSVESLNKKMKEEKDFLEKTRAKLT. The segment at 303–337 is disordered; the sequence is NGESQDDDSEFCFPEPPRSPVTPRGLRIDNDFSTD. The span at 328 to 337 shows a compositional bias: basic and acidic residues; it reads LRIDNDFSTD. The stretch at 344–375 forms a coiled coil; sequence ILKKLEEATEGVKQSKQALEAALNRVEIANVK.

It belongs to the WEB family.

This Arabidopsis thaliana (Mouse-ear cress) protein is WEB family protein At2g40480.